Here is a 178-residue protein sequence, read N- to C-terminus: Photosystem I assembly protein Ycf4 (178 aa).

The next 2 membrane-spanning stretches (helical) occupy residues 19–39 and 61–81; these read FLVAAAVSVGGVGFLLASLSS and LVMGLYSIAAALLASYLWYVI.

The protein belongs to the Ycf4 family.

The protein resides in the cellular thylakoid membrane. Its function is as follows. Seems to be required for the assembly of the photosystem I complex. The sequence is that of Photosystem I assembly protein Ycf4 from Synechococcus sp. (strain CC9902).